A 381-amino-acid polypeptide reads, in one-letter code: Neuropeptide Y receptor type 2 (381 aa).

The interval Met1 to Pro37 is disordered. The Extracellular portion of the chain corresponds to Met1–Val52. Asn11 is a glycosylation site (N-linked (GlcNAc...) asparagine). Residues Val53 to Ile73 traverse the membrane as a helical segment. The Cytoplasmic portion of the chain corresponds to His74–Asn87. The helical transmembrane segment at Phe88–Thr108 threads the bilayer. The Extracellular segment spans residues Leu109–His125. A disulfide bond links Cys124 and Cys204. A helical transmembrane segment spans residues Leu126–Ala146. At Leu147–Ser166 the chain is on the cytoplasmic side. The chain crosses the membrane as a helical span at residues Phe167 to Phe187. The Extracellular portion of the chain corresponds to Arg188–Gly217. The helical transmembrane segment at Thr218–Val238 threads the bilayer. The Cytoplasmic portion of the chain corresponds to Ser239–Lys269. Residues Met270–Leu290 traverse the membrane as a helical segment. Residues Ala291–Lys305 are Extracellular-facing. Residues Leu306 to Tyr326 form a helical membrane-spanning segment. Residues Gly327–Val381 are Cytoplasmic-facing. A lipid anchor (S-palmitoyl cysteine) is attached at Cys343.

It belongs to the G-protein coupled receptor 1 family.

Its subcellular location is the cell membrane. Functionally, receptor for neuropeptide Y and peptide YY. The sequence is that of Neuropeptide Y receptor type 2 (NPY2R) from Cavia porcellus (Guinea pig).